The following is a 132-amino-acid chain: Large ribosomal subunit protein uL24 (132 aa).

It belongs to the universal ribosomal protein uL24 family. As to quaternary structure, part of the 50S ribosomal subunit.

Functionally, one of two assembly initiator proteins, it binds directly to the 5'-end of the 23S rRNA, where it nucleates assembly of the 50S subunit. Its function is as follows. One of the proteins that surrounds the polypeptide exit tunnel on the outside of the subunit. The chain is Large ribosomal subunit protein uL24 from Aquifex aeolicus (strain VF5).